The following is a 1030-amino-acid chain: LPS-assembly protein LptD (1030 aa).

The N-terminal stretch at 1-32 (MEGPPTAAHAAAPLRTAVFLALAASWQQPAVA) is a signal peptide. Positions 50–213 (VAKRKDGGAD…APAGWTCKPQ (164 aa)) are disordered. Residues 78–91 (LSQSNRAAPSTAVS) show a composition bias toward polar residues. The span at 126–137 (TEDEEDEESESA) shows a compositional bias: acidic residues. Residues 161-171 (GTPPARAPRPE) show a composition bias toward pro residues.

The protein belongs to the LptD family. In terms of assembly, component of the lipopolysaccharide transport and assembly complex. Interacts with LptE and LptA.

It is found in the cell outer membrane. Functionally, together with LptE, is involved in the assembly of lipopolysaccharide (LPS) at the surface of the outer membrane. This chain is LPS-assembly protein LptD, found in Methylococcus capsulatus (strain ATCC 33009 / NCIMB 11132 / Bath).